The sequence spans 37 residues: Desulforedoxin (37 aa).

Cys-10, Cys-13, Cys-29, and Cys-30 together coordinate Fe cation.

To the N-terminal section of desulfoferrodoxin. In terms of assembly, homodimer. The cofactor is Fe cation.

Nonheme iron protein possibly involved in electron transport. This chain is Desulforedoxin (dsr), found in Megalodesulfovibrio gigas (Desulfovibrio gigas).